Consider the following 197-residue polypeptide: Ribosomal RNA large subunit methyltransferase E (197 aa).

Residues G52, W54, D72, D88, and D112 each coordinate S-adenosyl-L-methionine. The Proton acceptor role is filled by K152.

This sequence belongs to the class I-like SAM-binding methyltransferase superfamily. RNA methyltransferase RlmE family.

Its subcellular location is the cytoplasm. It carries out the reaction uridine(2552) in 23S rRNA + S-adenosyl-L-methionine = 2'-O-methyluridine(2552) in 23S rRNA + S-adenosyl-L-homocysteine + H(+). Its function is as follows. Specifically methylates the uridine in position 2552 of 23S rRNA at the 2'-O position of the ribose in the fully assembled 50S ribosomal subunit. The sequence is that of Ribosomal RNA large subunit methyltransferase E from Nitrosopumilus maritimus (strain SCM1).